The sequence spans 72 residues: Translation initiation factor IF-1 (72 aa).

Residues 1-72 (MSKEDAIEVM…TRGRIVYRYK (72 aa)) form the S1-like domain.

It belongs to the IF-1 family. Component of the 30S ribosomal translation pre-initiation complex which assembles on the 30S ribosome in the order IF-2 and IF-3, IF-1 and N-formylmethionyl-tRNA(fMet); mRNA recruitment can occur at any time during PIC assembly.

It is found in the cytoplasm. One of the essential components for the initiation of protein synthesis. Stabilizes the binding of IF-2 and IF-3 on the 30S subunit to which N-formylmethionyl-tRNA(fMet) subsequently binds. Helps modulate mRNA selection, yielding the 30S pre-initiation complex (PIC). Upon addition of the 50S ribosomal subunit IF-1, IF-2 and IF-3 are released leaving the mature 70S translation initiation complex. This chain is Translation initiation factor IF-1, found in Koribacter versatilis (strain Ellin345).